Consider the following 405-residue polypeptide: 4-hydroxy-3-methylbut-2-enyl diphosphate reductase (405 aa).

A [4Fe-4S] cluster-binding site is contributed by Cys66. His96 is a binding site for (2E)-4-hydroxy-3-methylbut-2-enyl diphosphate. Residue His96 coordinates dimethylallyl diphosphate. His96 lines the isopentenyl diphosphate pocket. Position 158 (Cys158) interacts with [4Fe-4S] cluster. Position 186 (His186) interacts with (2E)-4-hydroxy-3-methylbut-2-enyl diphosphate. His186 lines the dimethylallyl diphosphate pocket. His186 contributes to the isopentenyl diphosphate binding site. Glu188 serves as the catalytic Proton donor. Thr251 contributes to the (2E)-4-hydroxy-3-methylbut-2-enyl diphosphate binding site. Cys289 contacts [4Fe-4S] cluster. 4 residues coordinate (2E)-4-hydroxy-3-methylbut-2-enyl diphosphate: Ser318, Ser319, Asn320, and Ser380. 4 residues coordinate dimethylallyl diphosphate: Ser318, Ser319, Asn320, and Ser380. Isopentenyl diphosphate-binding residues include Ser318, Ser319, Asn320, and Ser380.

Belongs to the IspH family. Requires [4Fe-4S] cluster as cofactor.

It carries out the reaction isopentenyl diphosphate + 2 oxidized [2Fe-2S]-[ferredoxin] + H2O = (2E)-4-hydroxy-3-methylbut-2-enyl diphosphate + 2 reduced [2Fe-2S]-[ferredoxin] + 2 H(+). The catalysed reaction is dimethylallyl diphosphate + 2 oxidized [2Fe-2S]-[ferredoxin] + H2O = (2E)-4-hydroxy-3-methylbut-2-enyl diphosphate + 2 reduced [2Fe-2S]-[ferredoxin] + 2 H(+). The protein operates within isoprenoid biosynthesis; dimethylallyl diphosphate biosynthesis; dimethylallyl diphosphate from (2E)-4-hydroxy-3-methylbutenyl diphosphate: step 1/1. It functions in the pathway isoprenoid biosynthesis; isopentenyl diphosphate biosynthesis via DXP pathway; isopentenyl diphosphate from 1-deoxy-D-xylulose 5-phosphate: step 6/6. Catalyzes the conversion of 1-hydroxy-2-methyl-2-(E)-butenyl 4-diphosphate (HMBPP) into a mixture of isopentenyl diphosphate (IPP) and dimethylallyl diphosphate (DMAPP). Acts in the terminal step of the DOXP/MEP pathway for isoprenoid precursor biosynthesis. The chain is 4-hydroxy-3-methylbut-2-enyl diphosphate reductase from Cyanothece sp. (strain PCC 7425 / ATCC 29141).